We begin with the raw amino-acid sequence, 411 residues long: Common plant regulatory factor 1 (411 aa).

Residues 1 to 14 (MGNTDDVKAVKPEK) show a composition bias toward basic and acidic residues. Disordered regions lie at residues 1–30 (MGNTDDVKAVKPEKLSSPPPPAAPDQSNSH), 130–197 (AMSI…SSVI), and 232–293 (SSLE…KQAE). The segment covering 148–164 (TLSQSKETEGSSDGSNE) has biased composition (polar residues). Residues 235 to 244 (ELKDSPKEHA) show a composition bias toward basic and acidic residues. Residues 249-259 (AGGQQPSTMMP) show a composition bias toward polar residues. Positions 264-293 (LHNDRDLKRERRKQSNRESARRSRLRKQAE) are enriched in basic and acidic residues. In terms of domain architecture, bZIP spans 269–332 (DLKRERRKQS…EKLTNDNSRL (64 aa)). Residues 271–290 (KRERRKQSNRESARRSRLRK) form a basic motif region. Residues 297 to 332 (LAIKVDSLTAENMALKAEINRLTLTAEKLTNDNSRL) form a leucine-zipper region. Positions 346–411 (DVGLGNNNEK…NPRTDAVAAG (66 aa)) are disordered.

This sequence belongs to the bZIP family. In terms of assembly, binds DNA as a dimer.

Its subcellular location is the nucleus. In terms of biological role, binds to the G-box-like motif (5'-ACGTGGC-3') of the chalcone synthase (CHS) gene promoter. G-box and G-box-like motifs are defined in promoters of certain plant genes which are regulated by such diverse stimuli as light-induction or hormone control. This is Common plant regulatory factor 1 (CPRF1) from Petroselinum crispum (Parsley).